The sequence spans 128 residues: Ribonuclease P protein component 4 (128 aa).

4 residues coordinate Zn(2+): Cys63, Cys66, Cys92, and Cys95.

It belongs to the eukaryotic/archaeal RNase P protein component 4 family. As to quaternary structure, consists of a catalytic RNA component and at least 4 protein subunits. Forms a subcomplex with Rnp1 which stimulates the catalytic RNA. Zn(2+) is required as a cofactor.

The protein localises to the cytoplasm. The enzyme catalyses Endonucleolytic cleavage of RNA, removing 5'-extranucleotides from tRNA precursor.. Its function is as follows. Part of ribonuclease P, a protein complex that generates mature tRNA molecules by cleaving their 5'-ends. In Methanocaldococcus jannaschii (strain ATCC 43067 / DSM 2661 / JAL-1 / JCM 10045 / NBRC 100440) (Methanococcus jannaschii), this protein is Ribonuclease P protein component 4.